The chain runs to 129 residues: Follitropin subunit beta (129 aa).

An N-terminal signal peptide occupies residues 1-18 (MKTVQFCFLFCCWKAICC). Intrachain disulfides connect cysteine 21–cysteine 69, cysteine 35–cysteine 84, cysteine 38–cysteine 122, cysteine 46–cysteine 100, cysteine 50–cysteine 102, and cysteine 105–cysteine 112. 2 N-linked (GlcNAc...) asparagine glycosylation sites follow: asparagine 25 and asparagine 42.

The protein belongs to the glycoprotein hormones subunit beta family. In terms of assembly, heterodimer. The active follitropin is a heterodimer composed of an alpha chain/CGA shared with other hormones and a unique beta chain/FSHB shown here.

The protein localises to the secreted. Functionally, together with the alpha chain CGA constitutes follitropin, the follicle-stimulating hormone, and provides its biological specificity to the hormone heterodimer. Binds FSHR, a G protein-coupled receptor, on target cells to activate downstream signaling pathways. Follitropin is involved in follicle development and spermatogenesis in reproductive organs. The polypeptide is Follitropin subunit beta (FSHB) (Macaca fascicularis (Crab-eating macaque)).